The chain runs to 343 residues: Holliday junction branch migration complex subunit RuvB (343 aa).

The interval 1-20 (MEEMASRMISGDPELGEPFQ) is disordered. The tract at residues 1–185 (MEEMASRMIS…FGILARMQFY (185 aa)) is large ATPase domain (RuvB-L). ATP contacts are provided by residues L24, R25, G66, K69, T70, T71, 132-134 (EDF), R175, Y185, and R222. T70 is a Mg(2+) binding site. The tract at residues 186–256 (EPDELQQIVT…LADRALLALE (71 aa)) is small ATPAse domain (RuvB-S). The head domain (RuvB-H) stretch occupies residues 259–343 (RNGLDNMDHR…PRPVQQGTLL (85 aa)). Residues R295, R314, and R319 each contribute to the DNA site.

Belongs to the RuvB family. Homohexamer. Forms an RuvA(8)-RuvB(12)-Holliday junction (HJ) complex. HJ DNA is sandwiched between 2 RuvA tetramers; dsDNA enters through RuvA and exits via RuvB. An RuvB hexamer assembles on each DNA strand where it exits the tetramer. Each RuvB hexamer is contacted by two RuvA subunits (via domain III) on 2 adjacent RuvB subunits; this complex drives branch migration. In the full resolvosome a probable DNA-RuvA(4)-RuvB(12)-RuvC(2) complex forms which resolves the HJ.

Its subcellular location is the cytoplasm. The catalysed reaction is ATP + H2O = ADP + phosphate + H(+). In terms of biological role, the RuvA-RuvB-RuvC complex processes Holliday junction (HJ) DNA during genetic recombination and DNA repair, while the RuvA-RuvB complex plays an important role in the rescue of blocked DNA replication forks via replication fork reversal (RFR). RuvA specifically binds to HJ cruciform DNA, conferring on it an open structure. The RuvB hexamer acts as an ATP-dependent pump, pulling dsDNA into and through the RuvAB complex. RuvB forms 2 homohexamers on either side of HJ DNA bound by 1 or 2 RuvA tetramers; 4 subunits per hexamer contact DNA at a time. Coordinated motions by a converter formed by DNA-disengaged RuvB subunits stimulates ATP hydrolysis and nucleotide exchange. Immobilization of the converter enables RuvB to convert the ATP-contained energy into a lever motion, pulling 2 nucleotides of DNA out of the RuvA tetramer per ATP hydrolyzed, thus driving DNA branch migration. The RuvB motors rotate together with the DNA substrate, which together with the progressing nucleotide cycle form the mechanistic basis for DNA recombination by continuous HJ branch migration. Branch migration allows RuvC to scan DNA until it finds its consensus sequence, where it cleaves and resolves cruciform DNA. The protein is Holliday junction branch migration complex subunit RuvB of Magnetococcus marinus (strain ATCC BAA-1437 / JCM 17883 / MC-1).